Consider the following 860-residue polypeptide: Leucine--tRNA ligase (860 aa).

A 'HIGH' region motif is present at residues 42-52 (PYPSGRLHMGH). The short motif at 619-623 (KMSKS) is the 'KMSKS' region element. Lys-622 provides a ligand contact to ATP.

The protein belongs to the class-I aminoacyl-tRNA synthetase family.

It is found in the cytoplasm. The enzyme catalyses tRNA(Leu) + L-leucine + ATP = L-leucyl-tRNA(Leu) + AMP + diphosphate. This chain is Leucine--tRNA ligase, found in Yersinia pestis bv. Antiqua (strain Angola).